Consider the following 543-residue polypeptide: Chaperonin GroEL (543 aa).

ATP is bound by residues 30-33, Lys-51, 87-91, Gly-415, and Asp-496; these read TLGP and DGTTT.

It belongs to the chaperonin (HSP60) family. As to quaternary structure, forms a cylinder of 14 subunits composed of two heptameric rings stacked back-to-back. Interacts with the co-chaperonin GroES.

It is found in the cytoplasm. It catalyses the reaction ATP + H2O + a folded polypeptide = ADP + phosphate + an unfolded polypeptide.. Its function is as follows. Together with its co-chaperonin GroES, plays an essential role in assisting protein folding. The GroEL-GroES system forms a nano-cage that allows encapsulation of the non-native substrate proteins and provides a physical environment optimized to promote and accelerate protein folding. This is Chaperonin GroEL from Gluconobacter oxydans (strain 621H) (Gluconobacter suboxydans).